The primary structure comprises 447 residues: NADP-specific glutamate dehydrogenase (447 aa).

K92, Q113, and K116 together coordinate substrate. K128 serves as the catalytic Proton donor. G167 is a binding site for substrate. NADP(+) contacts are provided by T212 and N243. A substrate-binding site is contributed by S379.

This sequence belongs to the Glu/Leu/Phe/Val dehydrogenases family. Homohexamer.

The catalysed reaction is L-glutamate + NADP(+) + H2O = 2-oxoglutarate + NH4(+) + NADPH + H(+). Functionally, catalyzes the reversible oxidative deamination of glutamate to alpha-ketoglutarate and ammonia. The sequence is that of NADP-specific glutamate dehydrogenase (gdh) from Corynebacterium glutamicum (strain ATCC 13032 / DSM 20300 / JCM 1318 / BCRC 11384 / CCUG 27702 / LMG 3730 / NBRC 12168 / NCIMB 10025 / NRRL B-2784 / 534).